Here is a 553-residue protein sequence, read N- to C-terminus: Dihydroxy-acid dehydratase (553 aa).

D78 is a Mg(2+) binding site. C119 lines the [2Fe-2S] cluster pocket. 2 residues coordinate Mg(2+): D120 and K121. K121 carries the N6-carboxylysine modification. Residue C193 coordinates [2Fe-2S] cluster. Residue E441 participates in Mg(2+) binding. The active-site Proton acceptor is S467.

Belongs to the IlvD/Edd family. In terms of assembly, homodimer. [2Fe-2S] cluster serves as cofactor. It depends on Mg(2+) as a cofactor.

It carries out the reaction (2R)-2,3-dihydroxy-3-methylbutanoate = 3-methyl-2-oxobutanoate + H2O. The catalysed reaction is (2R,3R)-2,3-dihydroxy-3-methylpentanoate = (S)-3-methyl-2-oxopentanoate + H2O. It participates in amino-acid biosynthesis; L-isoleucine biosynthesis; L-isoleucine from 2-oxobutanoate: step 3/4. It functions in the pathway amino-acid biosynthesis; L-valine biosynthesis; L-valine from pyruvate: step 3/4. Functions in the biosynthesis of branched-chain amino acids. Catalyzes the dehydration of (2R,3R)-2,3-dihydroxy-3-methylpentanoate (2,3-dihydroxy-3-methylvalerate) into 2-oxo-3-methylpentanoate (2-oxo-3-methylvalerate) and of (2R)-2,3-dihydroxy-3-methylbutanoate (2,3-dihydroxyisovalerate) into 2-oxo-3-methylbutanoate (2-oxoisovalerate), the penultimate precursor to L-isoleucine and L-valine, respectively. The chain is Dihydroxy-acid dehydratase from Citrifermentans bemidjiense (strain ATCC BAA-1014 / DSM 16622 / JCM 12645 / Bem) (Geobacter bemidjiensis).